Consider the following 260-residue polypeptide: Arginine esterase (260 aa).

A signal peptide spans 1–17 (MWFLALCLAMSLGWTGA). The propeptide at 18–24 (EPHFQPR) is activation peptide. In terms of domain architecture, Peptidase S1 spans 25-257 (IIGGRECLKN…HLMWIKDTMK (233 aa)). 5 cysteine pairs are disulfide-bonded: C31/C172, C50/C66, C151/C218, C183/C197, and C208/C233. The active-site Charge relay system is H65. N79 carries an N-linked (GlcNAc...) asparagine glycan. The Charge relay system role is filled by D119. The Charge relay system role is filled by S212.

This sequence belongs to the peptidase S1 family. Kallikrein subfamily.

The catalysed reaction is Preferential cleavage of Arg-|-Xaa bonds in small molecule substrates. Highly selective action to release kallidin (lysyl-bradykinin) from kininogen involves hydrolysis of Met-|-Xaa or Leu-|-Xaa.. In terms of biological role, this serine protease is found in dog seminal plasma, its exact physiological function is not known. The chain is Arginine esterase from Canis lupus familiaris (Dog).